A 130-amino-acid polypeptide reads, in one-letter code: Small ribosomal subunit protein uS8 (130 aa).

It belongs to the universal ribosomal protein uS8 family. Part of the 30S ribosomal subunit.

Its function is as follows. One of the primary rRNA binding proteins, it binds directly to 16S rRNA central domain where it helps coordinate assembly of the platform of the 30S subunit. This chain is Small ribosomal subunit protein uS8, found in Methanococcus voltae.